The sequence spans 94 residues: Large ribosomal subunit protein uL23 (94 aa).

The protein belongs to the universal ribosomal protein uL23 family. In terms of assembly, part of the 50S ribosomal subunit. Contacts protein L29, and trigger factor when it is bound to the ribosome.

Functionally, one of the early assembly proteins it binds 23S rRNA. One of the proteins that surrounds the polypeptide exit tunnel on the outside of the ribosome. Forms the main docking site for trigger factor binding to the ribosome. This is Large ribosomal subunit protein uL23 from Listeria monocytogenes serotype 4b (strain CLIP80459).